A 311-amino-acid polypeptide reads, in one-letter code: Formimidoylglutamase (311 aa).

Positions 130, 155, 157, 159, 242, and 244 each coordinate Mn(2+).

Belongs to the arginase family. Requires Mn(2+) as cofactor.

It carries out the reaction N-formimidoyl-L-glutamate + H2O = formamide + L-glutamate. It functions in the pathway amino-acid degradation; L-histidine degradation into L-glutamate; L-glutamate from N-formimidoyl-L-glutamate (hydrolase route): step 1/1. Catalyzes the conversion of N-formimidoyl-L-glutamate to L-glutamate and formamide. The chain is Formimidoylglutamase from Staphylococcus haemolyticus (strain JCSC1435).